A 435-amino-acid polypeptide reads, in one-letter code: Enolase (435 aa).

Gln167 is a (2R)-2-phosphoglycerate binding site. Glu209 serves as the catalytic Proton donor. Mg(2+) contacts are provided by Asp246, Glu291, and Asp318. 4 residues coordinate (2R)-2-phosphoglycerate: Lys343, Arg372, Ser373, and Lys394. The active-site Proton acceptor is the Lys343.

This sequence belongs to the enolase family. Component of the RNA degradosome, a multiprotein complex involved in RNA processing and mRNA degradation. Mg(2+) serves as cofactor.

The protein resides in the cytoplasm. It localises to the secreted. The protein localises to the cell surface. The enzyme catalyses (2R)-2-phosphoglycerate = phosphoenolpyruvate + H2O. It participates in carbohydrate degradation; glycolysis; pyruvate from D-glyceraldehyde 3-phosphate: step 4/5. Functionally, catalyzes the reversible conversion of 2-phosphoglycerate (2-PG) into phosphoenolpyruvate (PEP). It is essential for the degradation of carbohydrates via glycolysis. This is Enolase from Psychromonas ingrahamii (strain DSM 17664 / CCUG 51855 / 37).